A 398-amino-acid chain; its full sequence is Carbamoyl phosphate synthase small chain (398 aa).

The segment at 1–204 (MSPLLPSFPP…PAYGTLDTGK (204 aa)) is CPSase. Positions 53, 256, and 258 each coordinate L-glutamine. The Glutamine amidotransferase type-1 domain maps to 208–395 (KVVAYDFGVK…VELMNAASKK (188 aa)). Cys284 (nucleophile) is an active-site residue. L-glutamine contacts are provided by Leu285, Gln288, Asn326, Gly328, and Phe329. Active-site residues include His368 and Glu370.

Belongs to the CarA family. As to quaternary structure, composed of two chains; the small (or glutamine) chain promotes the hydrolysis of glutamine to ammonia, which is used by the large (or ammonia) chain to synthesize carbamoyl phosphate. Tetramer of heterodimers (alpha,beta)4.

It catalyses the reaction hydrogencarbonate + L-glutamine + 2 ATP + H2O = carbamoyl phosphate + L-glutamate + 2 ADP + phosphate + 2 H(+). The enzyme catalyses L-glutamine + H2O = L-glutamate + NH4(+). It participates in amino-acid biosynthesis; L-arginine biosynthesis; carbamoyl phosphate from bicarbonate: step 1/1. Its pathway is pyrimidine metabolism; UMP biosynthesis via de novo pathway; (S)-dihydroorotate from bicarbonate: step 1/3. Its function is as follows. Small subunit of the glutamine-dependent carbamoyl phosphate synthetase (CPSase). CPSase catalyzes the formation of carbamoyl phosphate from the ammonia moiety of glutamine, carbonate, and phosphate donated by ATP, constituting the first step of 2 biosynthetic pathways, one leading to arginine and/or urea and the other to pyrimidine nucleotides. The small subunit (glutamine amidotransferase) binds and cleaves glutamine to supply the large subunit with the substrate ammonia. This is Carbamoyl phosphate synthase small chain from Polynucleobacter necessarius subsp. necessarius (strain STIR1).